The following is a 96-amino-acid chain: Ubiquitin-related modifier 1 (96 aa).

Glycine 96 carries the post-translational modification 1-thioglycine. A Glycyl lysine isopeptide (Gly-Lys) (interchain with K-? in acceptor proteins) cross-link involves residue glycine 96.

It belongs to the URM1 family. In terms of processing, C-terminal thiocarboxylation occurs in 2 steps, it is first acyl-adenylated (-COAMP) via the hesA/moeB/thiF part of UBA4, then thiocarboxylated (-COSH) via the rhodanese domain of UBA4.

The protein resides in the cytoplasm. The protein operates within tRNA modification; 5-methoxycarbonylmethyl-2-thiouridine-tRNA biosynthesis. Its function is as follows. Acts as a sulfur carrier required for 2-thiolation of mcm(5)S(2)U at tRNA wobble positions of cytosolic tRNA(Lys), tRNA(Glu) and tRNA(Gln). Serves as sulfur donor in tRNA 2-thiolation reaction by being thiocarboxylated (-COSH) at its C-terminus by the MOCS3 homolog UBA4. The sulfur is then transferred to tRNA to form 2-thiolation of mcm(5)S(2)U. Prior mcm(5) tRNA modification by the elongator complex is required for 2-thiolation. Also acts as a ubiquitin-like protein (UBL) that is covalently conjugated via an isopeptide bond to lysine residues of target proteins such as AHP1. The thiocarboxylated form serves as substrate for conjugation and oxidative stress specifically induces the formation of UBL-protein conjugates. The protein is Ubiquitin-related modifier 1 of Encephalitozoon cuniculi (strain GB-M1) (Microsporidian parasite).